A 292-amino-acid polypeptide reads, in one-letter code: 4-hydroxy-tetrahydrodipicolinate synthase (292 aa).

Thr-45 is a pyruvate binding site. Residue Tyr-133 is the Proton donor/acceptor of the active site. The Schiff-base intermediate with substrate role is filled by Lys-161. Ile-203 contacts pyruvate.

It belongs to the DapA family. In terms of assembly, homotetramer; dimer of dimers.

It localises to the cytoplasm. The catalysed reaction is L-aspartate 4-semialdehyde + pyruvate = (2S,4S)-4-hydroxy-2,3,4,5-tetrahydrodipicolinate + H2O + H(+). It functions in the pathway amino-acid biosynthesis; L-lysine biosynthesis via DAP pathway; (S)-tetrahydrodipicolinate from L-aspartate: step 3/4. Its function is as follows. Catalyzes the condensation of (S)-aspartate-beta-semialdehyde [(S)-ASA] and pyruvate to 4-hydroxy-tetrahydrodipicolinate (HTPA). The chain is 4-hydroxy-tetrahydrodipicolinate synthase from Aromatoleum aromaticum (strain DSM 19018 / LMG 30748 / EbN1) (Azoarcus sp. (strain EbN1)).